The sequence spans 366 residues: MPGIRVLVVDDSVVIRKLVSDLLSADPDIEVVGTAVNGRAALQKVAQLRPDLVTMDIEMPEMDGIESVRAIRATGNKVPIIMFSTLTERGAVATLDALGAGASDYVPKPANVGSVGRSMEQVREALIPRIKSLVPRRGITPHPAGVTVAPTATVQLHAPATPPLGGHRLLVIGSSTGGPEALSALLHTLPPLSVPVAVVQHMPPLFTRQFAARLDRQLPYDVVEAEHNQPLRPGTVAIAPGDYHLEVTTDAAGLRTRLTQAPPENYCRPAVDVLFRSAVAAVGPAVLAAVLTGMGSDGCKGARLIVERGGSVLAQDQATSVVWGMPGAVATAGLAERVLPLLELGPEILRRLARQRPSLVPAGALS.

The Response regulatory domain maps to R5 to R123. 4-aspartylphosphate is present on D56. The CheB-type methylesterase domain occupies P163–Q355. Active-site residues include S175, H201, and D297.

This sequence belongs to the CheB family. Phosphorylated by CheA. Phosphorylation of the N-terminal regulatory domain activates the methylesterase activity.

It is found in the cytoplasm. The enzyme catalyses [protein]-L-glutamate 5-O-methyl ester + H2O = L-glutamyl-[protein] + methanol + H(+). It carries out the reaction L-glutaminyl-[protein] + H2O = L-glutamyl-[protein] + NH4(+). Involved in chemotaxis. Part of a chemotaxis signal transduction system that modulates chemotaxis in response to various stimuli. Catalyzes the demethylation of specific methylglutamate residues introduced into the chemoreceptors (methyl-accepting chemotaxis proteins or MCP) by CheR. Also mediates the irreversible deamidation of specific glutamine residues to glutamic acid. The polypeptide is Protein-glutamate methylesterase/protein-glutamine glutaminase (Nocardioides sp. (strain ATCC BAA-499 / JS614)).